Consider the following 712-residue polypeptide: DNA ligase (712 aa).

The segment at 1–22 is disordered; that stretch reads MVQKNEHQGGQSQHSLFAAGPT. NAD(+) is bound by residues 53 to 57 and D138; that span reads DDQFD. Residue K140 is the N6-AMP-lysine intermediate of the active site. NAD(+)-binding residues include R161, E199, K318, and K342. 4 residues coordinate Zn(2+): C436, C439, C454, and C459. Residues 612 to 631 are disordered; sequence RGGRSGGGSSGSTGEGGLAS. Residues 614–630 are compositionally biased toward gly residues; sequence GRSGGGSSGSTGEGGLA. The region spanning 629–712 is the BRCT domain; that stretch reads LASGPLAGKN…MLREAKAASE (84 aa).

The protein belongs to the NAD-dependent DNA ligase family. LigA subfamily. The cofactor is Mg(2+). Mn(2+) serves as cofactor.

It catalyses the reaction NAD(+) + (deoxyribonucleotide)n-3'-hydroxyl + 5'-phospho-(deoxyribonucleotide)m = (deoxyribonucleotide)n+m + AMP + beta-nicotinamide D-nucleotide.. Functionally, DNA ligase that catalyzes the formation of phosphodiester linkages between 5'-phosphoryl and 3'-hydroxyl groups in double-stranded DNA using NAD as a coenzyme and as the energy source for the reaction. It is essential for DNA replication and repair of damaged DNA. The sequence is that of DNA ligase from Desulfovibrio desulfuricans (strain ATCC 27774 / DSM 6949 / MB).